The following is a 677-amino-acid chain: MTDNFADLRRQWDDLAEQVRHHRDAYYNHTPEISDAEFDQLFRQLQQLEQEHPELAVPESPTLRVGAPVEQSSFDNVEHLERMLSLDNVFDAAELDDWLQRTPSATYLTELKIDGLSIDLVYRSGRLERAATRGDGRVGEDVTANAKVIEDIPHRLQHSDAYPVPELVEIRGEVFIAVEDFALVNEQRQKEGGKPFANPRNAAAGSLRQKDTEAVRKRRLKMICHGIGASEGFEADTQFDAYKALEAWGLPVSPYTKRVHSAQEVQERVTYWAQHRHDATHEMDGLVIKIDSFAEQRALGSTARAPRWAIAYKYPPEEVTTKLLDIQVGVGRTGRVTPFAVMDPVFVAGSTVEMATLHNQTEVKRKGVLIGDTVVIRKAGEVIPEVLGPVVEKRDGSEREFIFPTLCPACGTRLAPQKEDDADWRCPNSQSCPAQLSSRLTYLAGRGAFDIEALGEKGAEDLIASGVLIDEAQLFNLTEDDLKRTKVYTTKAGALNATGEKLLANLESAKHTDLWRVLVALSIRHVGPTAARALAVRYRSLEALRAADVEDIANTEGVGAIIAQSFAQWFDVPWHRNIVEVWADAGVTMADSEADIPDQVLEGLTIVVTGSLVDFSRDSAKEAIVSRGGKASGSVSKKTSYVVVGENAGSKETKARDLGLRILNEDEFKQLLANGTV.

NAD(+) is bound by residues Asp35–Asp39, Ser85–Leu86, and Glu110. Lys112 (N6-AMP-lysine intermediate) is an active-site residue. Residues Arg133 and Glu173 each contribute to the NAD(+) site. The segment at Gln189 to Lys210 is disordered. Lys289 and Lys313 together coordinate NAD(+). Cys407, Cys410, Cys426, and Cys432 together coordinate Zn(2+). One can recognise a BRCT domain in the interval Ile596 to Val677.

It belongs to the NAD-dependent DNA ligase family. LigA subfamily. Mg(2+) is required as a cofactor. Requires Mn(2+) as cofactor.

The enzyme catalyses NAD(+) + (deoxyribonucleotide)n-3'-hydroxyl + 5'-phospho-(deoxyribonucleotide)m = (deoxyribonucleotide)n+m + AMP + beta-nicotinamide D-nucleotide.. DNA ligase that catalyzes the formation of phosphodiester linkages between 5'-phosphoryl and 3'-hydroxyl groups in double-stranded DNA using NAD as a coenzyme and as the energy source for the reaction. It is essential for DNA replication and repair of damaged DNA. The chain is DNA ligase from Corynebacterium diphtheriae (strain ATCC 700971 / NCTC 13129 / Biotype gravis).